A 513-amino-acid polypeptide reads, in one-letter code: ATP synthase subunit alpha (513 aa).

Position 169-176 (169-176 (GDRQIGKT)) interacts with ATP.

It belongs to the ATPase alpha/beta chains family. F-type ATPases have 2 components, CF(1) - the catalytic core - and CF(0) - the membrane proton channel. CF(1) has five subunits: alpha(3), beta(3), gamma(1), delta(1), epsilon(1). CF(0) has three main subunits: a(1), b(2) and c(9-12). The alpha and beta chains form an alternating ring which encloses part of the gamma chain. CF(1) is attached to CF(0) by a central stalk formed by the gamma and epsilon chains, while a peripheral stalk is formed by the delta and b chains.

Its subcellular location is the cell inner membrane. It carries out the reaction ATP + H2O + 4 H(+)(in) = ADP + phosphate + 5 H(+)(out). Functionally, produces ATP from ADP in the presence of a proton gradient across the membrane. The alpha chain is a regulatory subunit. The polypeptide is ATP synthase subunit alpha (Shewanella halifaxensis (strain HAW-EB4)).